The following is an 881-amino-acid chain: Alanine--tRNA ligase (881 aa).

The protein belongs to the class-II aminoacyl-tRNA synthetase family.

Its subcellular location is the cytoplasm. It carries out the reaction tRNA(Ala) + L-alanine + ATP = L-alanyl-tRNA(Ala) + AMP + diphosphate. Catalyzes the attachment of alanine to tRNA(Ala) in a two-step reaction: alanine is first activated by ATP to form Ala-AMP and then transferred to the acceptor end of tRNA(Ala). Also edits incorrectly charged Ser-tRNA(Ala) and Gly-tRNA(Ala) via its editing domain. The sequence is that of Alanine--tRNA ligase (alaS) from Lacticaseibacillus paracasei (strain ATCC 334 / BCRC 17002 / CCUG 31169 / CIP 107868 / KCTC 3260 / NRRL B-441) (Lactobacillus paracasei).